The sequence spans 536 residues: uncharacterized protein (536 aa).

A Radical SAM core domain is found at 163–394 (LDAYDSMSVQ…MNFIPTRPLE (232 aa)). The [4Fe-4S] cluster site is built by cysteine 177, cysteine 181, and cysteine 184.

The cofactor is [4Fe-4S] cluster.

This is an uncharacterized protein from Synechocystis sp. (strain ATCC 27184 / PCC 6803 / Kazusa).